A 338-amino-acid chain; its full sequence is Glyceraldehyde-3-phosphate dehydrogenase (338 aa).

Residues 12-13, Asp34, and Arg79 contribute to the NAD(+) site; that span reads RI. D-glyceraldehyde 3-phosphate-binding positions include 150–152, Thr181, 210–211, and Arg233; these read SCT and TG. Cys151 serves as the catalytic Nucleophile. Position 316 (Asn316) interacts with NAD(+).

Belongs to the glyceraldehyde-3-phosphate dehydrogenase family. Homotetramer.

It localises to the cytoplasm. It catalyses the reaction D-glyceraldehyde 3-phosphate + phosphate + NAD(+) = (2R)-3-phospho-glyceroyl phosphate + NADH + H(+). It participates in carbohydrate degradation; glycolysis; pyruvate from D-glyceraldehyde 3-phosphate: step 1/5. The sequence is that of Glyceraldehyde-3-phosphate dehydrogenase (GPD) from Yarrowia lipolytica (strain CLIB 122 / E 150) (Yeast).